Consider the following 1070-residue polypeptide: DNA-directed RNA polymerase subunit beta (1070 aa).

It belongs to the RNA polymerase beta chain family. In terms of assembly, in plastids the minimal PEP RNA polymerase catalytic core is composed of four subunits: alpha, beta, beta', and beta''. When a (nuclear-encoded) sigma factor is associated with the core the holoenzyme is formed, which can initiate transcription.

Its subcellular location is the plastid. It localises to the chloroplast. It carries out the reaction RNA(n) + a ribonucleoside 5'-triphosphate = RNA(n+1) + diphosphate. Functionally, DNA-dependent RNA polymerase catalyzes the transcription of DNA into RNA using the four ribonucleoside triphosphates as substrates. In Liriodendron tulipifera (Tuliptree), this protein is DNA-directed RNA polymerase subunit beta.